Consider the following 473-residue polypeptide: Heavy metal-associated isoprenylated plant protein 32 (473 aa).

The 64-residue stretch at 9–72 folds into the HMA domain; that stretch reads IQTCVLKVNI…KLAKSGKHAE (64 aa). Positions 20 and 23 each coordinate a metal cation. Disordered stretches follow at residues 96–139, 162–230, and 246–343; these read QIDH…KMGQ, KLPP…PNMT, and ANLA…QNMS. The span at 118–131 shows a compositional bias: gly residues; that stretch reads KNGGGGGGGGGGGN. Residues 187-217 show a composition bias toward acidic residues; that stretch reads PEDDDDDDFSDEFDDEFTDDDDDEFDDEFDD. Over residues 253–339 the composition is skewed to gly residues; that stretch reads AKNGGKGAPA…GFRPMGGGGP (87 aa). Position 470 is a cysteine methyl ester (C470). C470 carries the S-farnesyl cysteine lipid modification. Positions 471 to 473 are cleaved as a propeptide — removed in mature form; sequence DIM.

This sequence belongs to the HIPP family.

Heavy-metal-binding protein. The sequence is that of Heavy metal-associated isoprenylated plant protein 32 from Arabidopsis thaliana (Mouse-ear cress).